A 625-amino-acid polypeptide reads, in one-letter code: Phosphomethylpyrimidine synthase (625 aa).

Residues Asn-231, Met-260, Tyr-289, His-325, 345–347 (SRG), 386–389 (DGLR), and Glu-425 each bind substrate. Residue His-429 coordinates Zn(2+). Tyr-452 is a substrate binding site. Residue His-493 participates in Zn(2+) binding. 3 residues coordinate [4Fe-4S] cluster: Cys-573, Cys-576, and Cys-581.

It belongs to the ThiC family. In terms of assembly, homodimer. [4Fe-4S] cluster serves as cofactor.

The catalysed reaction is 5-amino-1-(5-phospho-beta-D-ribosyl)imidazole + S-adenosyl-L-methionine = 4-amino-2-methyl-5-(phosphooxymethyl)pyrimidine + CO + 5'-deoxyadenosine + formate + L-methionine + 3 H(+). The protein operates within cofactor biosynthesis; thiamine diphosphate biosynthesis. Catalyzes the synthesis of the hydroxymethylpyrimidine phosphate (HMP-P) moiety of thiamine from aminoimidazole ribotide (AIR) in a radical S-adenosyl-L-methionine (SAM)-dependent reaction. The sequence is that of Phosphomethylpyrimidine synthase from Acinetobacter baumannii (strain SDF).